A 140-amino-acid chain; its full sequence is Putative peptidyl-tRNA hydrolase PTRHD1 (140 aa).

This sequence belongs to the PTH2 family. PTRHD1 subfamily.

It catalyses the reaction an N-acyl-L-alpha-aminoacyl-tRNA + H2O = an N-acyl-L-amino acid + a tRNA + H(+). Its function is as follows. As a putative peptidyl-tRNA hydrolase, it might be involved in releasing tRNAs from the ribosome during protein synthesis. Some evidence, however, suggests that it lacks peptidyl-tRNA hydrolase activity. The sequence is that of Putative peptidyl-tRNA hydrolase PTRHD1 (PTRHD1) from Homo sapiens (Human).